Consider the following 228-residue polypeptide: tRNA (guanine-N(1)-)-methyltransferase (228 aa).

S-adenosyl-L-methionine-binding positions include glycine 111 and 135–140; that span reads LGDYVL.

The protein belongs to the RNA methyltransferase TrmD family. As to quaternary structure, homodimer.

Its subcellular location is the cytoplasm. The catalysed reaction is guanosine(37) in tRNA + S-adenosyl-L-methionine = N(1)-methylguanosine(37) in tRNA + S-adenosyl-L-homocysteine + H(+). In terms of biological role, specifically methylates guanosine-37 in various tRNAs. This Clavibacter sepedonicus (Clavibacter michiganensis subsp. sepedonicus) protein is tRNA (guanine-N(1)-)-methyltransferase.